The following is a 577-amino-acid chain: Pentatricopeptide repeat-containing protein At2g01390 (577 aa).

PPR repeat units lie at residues 121–155 (DHFT…GVLI), 156–190 (DTVT…GCEP), 191–225 (TVVS…RVSP), 226–260 (NCHT…GVQP), 261–295 (DKAA…GVVL), 382–416 (DSFV…GIHL), 417–451 (KKSA…QHSL), 452–482 (GCYQ…LPDD), 485–519 (GVAA…EIMP), and 520–554 (SLGT…LVAS).

It belongs to the PPR family. P subfamily.

The sequence is that of Pentatricopeptide repeat-containing protein At2g01390 from Arabidopsis thaliana (Mouse-ear cress).